Consider the following 263-residue polypeptide: 3-methyl-2-oxobutanoate hydroxymethyltransferase (263 aa).

Mg(2+)-binding residues include Asp-45 and Asp-84. 3-methyl-2-oxobutanoate is bound by residues 45–46 (DS), Asp-84, and Lys-112. Glu-114 is a binding site for Mg(2+). Glu-180 (proton acceptor) is an active-site residue.

It belongs to the PanB family. In terms of assembly, homodecamer; pentamer of dimers. It depends on Mg(2+) as a cofactor.

Its subcellular location is the cytoplasm. It catalyses the reaction 3-methyl-2-oxobutanoate + (6R)-5,10-methylene-5,6,7,8-tetrahydrofolate + H2O = 2-dehydropantoate + (6S)-5,6,7,8-tetrahydrofolate. It participates in cofactor biosynthesis; (R)-pantothenate biosynthesis; (R)-pantoate from 3-methyl-2-oxobutanoate: step 1/2. Functionally, catalyzes the reversible reaction in which hydroxymethyl group from 5,10-methylenetetrahydrofolate is transferred onto alpha-ketoisovalerate to form ketopantoate. This is 3-methyl-2-oxobutanoate hydroxymethyltransferase from Salmonella paratyphi C (strain RKS4594).